A 221-amino-acid chain; its full sequence is Large ribosomal subunit protein uL3 (221 aa).

Belongs to the universal ribosomal protein uL3 family. As to quaternary structure, part of the 50S ribosomal subunit. Forms a cluster with proteins L14 and L19.

Its function is as follows. One of the primary rRNA binding proteins, it binds directly near the 3'-end of the 23S rRNA, where it nucleates assembly of the 50S subunit. This Chlamydia muridarum (strain MoPn / Nigg) protein is Large ribosomal subunit protein uL3.